The following is a 1542-amino-acid chain: MNTPDDSSVSSVDSHQPYMGFDDNVEKRIRELARSLTQQSLTSSNRSVNKEAPADGSAPLDRVSTRASSIFSADFKGVNPVFSDEEEDDYDARLDPNSDEFSSKAWVQNMAKITTGDPEFYKPYSIGCCWKDLSASGESADVSYQSTFLNLPVKLLNAVWRKARPARESDTFRILKPMDGLLKPGELLVVLGRPGSGCTTLLKSISSTTHGFQISKDSVISYNGLTPNEIKKHYRGEVVYNAEADIHLPHLTVYQTLVTVARLKTPQNRVKGVTREDFANHVTDVAMATYGLSHTRDTKVGNDLVRGVSGGERKRVSIAEVWICGSKFQCWDNATRGLDSATALEFVRALKTQAHIAKNVATVAIYQCSQDAYNLFNKVSVLYEGYQIYFGDAQHAKVYFQKMGYFCPKRQTIPDFLTSITSPAERRINKEYLDKGIKVPQTPLDMVEYWHNSEEYKQLREEIDETLAHQSEDDKEEIKEAHIAKQSKRARPSSPYVVSYMMQVKYILIRNFWRIKNSASVTLFQVFGNSAMAFILGSMFYKIQKGSSADTFYFRGAAMFFAILFNAFSSLLEIFSLYEARPITEKHRTYSLYHPSADAFASVISEIPPKIVTAILFNIIFYFLVNFRRDAGRFFFYFLINVIAVFAMSHLFRCVGSLTKTLQEAMVPASMLLLALSMYTGFAIPRTKMLGWSKWIWYINPLAYLFESLMVNEFHDRRFPCNTYIPRGGAYNDVTGTERVCASVGARPGNDYVLGDDFLKESYDYENKHKWRGFGVGMAYVIFFFFVYLILCEFNEGAKQKGEMLVFPHSVVKRMKKEGKIRDKTKMHTDKNDIENNSESITSNATNEKNMLQDTYDENADSESITSGSRGGSPQVGLSKSEAIFHWQNLCYDVPIKTEVRRILNNVDGWVKPGTLTALMGASGAGKTTLLDCLAERTTMGVITGDVMVNGRPRDTSFSRSIGYCQQQDLHLKTATVRESLRFSAYLRQPSSVSIEEKNEYVEAVIKILEMETYADAVVGVPGEGLNVEQRKRLTIGVELAAKPKLLVFLDEPTSGLDSQTAWATCQLMKKLANHGQAILCTIHQPSAMLMQEFDRLLFLQKGGQTVYFGDLGKGCKTMIKYFEDHGAHKCPPDANPAEWMLEVVGAAPGSHANQDYHEVWRNSEQFKQVKQELEQMEKELSQKELDNDEDANKEFATSLWYQFQLVCVRLFQQYWRTPDYLWSKYILTIFNQLFIGFTFFKADHTLQGLQNQMLSIFMYTVIFNPLLQQYLPTFVQQRDLYEARERPSRTFSWKAFILAQIVVEVPWNIVAGTLAYCIYYYSVGFYANASQAHQLHERGALFWLFSIAFYVYVGSLGLFVISFNEVAETAAHIGSLMFTMALSFCGVMATPDAMPRFWIFMYRVSPLTYLIDALLSTGVANVDIRCSNTELVTFTPPQGLTCGQYMTPYLNVAGTGYLTDPSATDECHFCQFSYTNDFLATVSSKYYRRWRNYGIFICFIVFDYVAGIFLYWLARVPKTNGKIAKNGKTAKVNFIRRLIPF.

The span at 1–14 (MNTPDDSSVSSVDS) shows a compositional bias: low complexity. The tract at residues 1 to 61 (MNTPDDSSVS…APADGSAPLD (61 aa)) is disordered. Over 1–517 (MNTPDDSSVS…LIRNFWRIKN (517 aa)) the chain is Cytoplasmic. Positions 24–33 (NVEKRIRELA) are enriched in basic and acidic residues. The span at 35-47 (SLTQQSLTSSNRS) shows a compositional bias: polar residues. Residues 153–409 (VKLLNAVWRK…FQKMGYFCPK (257 aa)) form the ABC transporter 1 domain. A run of 6 helical transmembrane segments spans residues 518 to 540 (SASV…GSMF), 552 to 574 (FYFR…LLEI), 603 to 625 (VISE…YFLV), 634 to 652 (FFFY…SHLF), 662 to 684 (LQEA…GFAI), and 773 to 792 (GFGV…LILC). At 793–1220 (EFNEGAKQKG…LFQQYWRTPD (428 aa)) the chain is on the cytoplasmic side. Residues 825 to 834 (TKMHTDKNDI) show a composition bias toward basic and acidic residues. The disordered stretch occupies residues 825 to 846 (TKMHTDKNDIENNSESITSNAT). Positions 835-846 (ENNSESITSNAT) are enriched in polar residues. An ABC transporter 2 domain is found at 885-1128 (FHWQNLCYDV…MIKYFEDHGA (244 aa)). An ATP-binding site is contributed by 921 to 928 (GASGAGKT). 6 helical membrane-spanning segments follow: residues 1221–1241 (YLWS…FTFF), 1256–1276 (SIFM…PTFV), 1296–1316 (AFIL…GTLA), 1342–1362 (LFWL…LFVI), 1370–1390 (TAAH…GVMA), and 1495–1515 (GIFI…YWLA). Over 1516 to 1542 (RVPKTNGKIAKNGKTAKVNFIRRLIPF) the chain is Cytoplasmic.

Belongs to the ABC transporter superfamily. ABCG family. PDR (TC 3.A.1.205) subfamily. Post-translationally, phosphorylated by PKA. Dephosphorylated on glucose depletion and independently rephosphorylated during glucose exposure or under stress.

The protein localises to the cell membrane. Pleiotropic ABC efflux transporter that confers resistance to structurally and functionally unrelated compounds including caspofungin or azoles such as fluconazole, itraconazole, posaconazole, voriconazole, and isavuconazole. Does not play a role in the azole resistance in mature biofilms. The chain is Pleiotropic ABC efflux transporter of multiple drugs PDH1 from Candida glabrata (strain ATCC 2001 / BCRC 20586 / JCM 3761 / NBRC 0622 / NRRL Y-65 / CBS 138) (Yeast).